We begin with the raw amino-acid sequence, 323 residues long: Mycothiol acetyltransferase (323 aa).

N-acetyltransferase domains lie at 21-176 and 173-323; these read ELLR…VSLR and VSLR…LTKN. 1D-myo-inositol 2-(L-cysteinylamino)-2-deoxy-alpha-D-glucopyranoside is bound at residue Glu44. 98–100 is a binding site for acetyl-CoA; sequence LAV. 1D-myo-inositol 2-(L-cysteinylamino)-2-deoxy-alpha-D-glucopyranoside-binding residues include Glu200, Lys240, and Glu253. Acetyl-CoA contacts are provided by residues 257–259 and 264–270; these read VGV and QGLGLGK. Tyr291 provides a ligand contact to 1D-myo-inositol 2-(L-cysteinylamino)-2-deoxy-alpha-D-glucopyranoside.

The protein belongs to the acetyltransferase family. MshD subfamily. Monomer.

The enzyme catalyses 1D-myo-inositol 2-(L-cysteinylamino)-2-deoxy-alpha-D-glucopyranoside + acetyl-CoA = mycothiol + CoA + H(+). Its function is as follows. Catalyzes the transfer of acetyl from acetyl-CoA to desacetylmycothiol (Cys-GlcN-Ins) to form mycothiol. The protein is Mycothiol acetyltransferase of Paenarthrobacter aurescens (strain TC1).